Here is a 183-residue protein sequence, read N- to C-terminus: A-type ATP synthase subunit E (183 aa).

The protein belongs to the V-ATPase E subunit family. In terms of assembly, has multiple subunits, A(3), B(3), C, D, E, F, G, I and K(x); there may be a few other subunits as well.

Its subcellular location is the cell membrane. In terms of biological role, component of the A-type ATP synthase that produces ATP from ADP in the presence of a proton gradient across the membrane. The chain is A-type ATP synthase subunit E from Methanosarcina mazei (strain ATCC BAA-159 / DSM 3647 / Goe1 / Go1 / JCM 11833 / OCM 88) (Methanosarcina frisia).